Consider the following 120-residue polypeptide: NAD(P)H-quinone oxidoreductase subunit 3, chloroplastic (120 aa).

Helical transmembrane passes span 9-29 (IFWAFLIISSAIPVLAFFISG), 64-84 (MFALVFVVFDVETVFLYPWAM), and 88-108 (VLGVSAFIEAFIFVLILILGL).

It belongs to the complex I subunit 3 family. As to quaternary structure, NDH is composed of at least 16 different subunits, 5 of which are encoded in the nucleus.

It is found in the plastid. The protein resides in the chloroplast thylakoid membrane. It carries out the reaction a plastoquinone + NADH + (n+1) H(+)(in) = a plastoquinol + NAD(+) + n H(+)(out). It catalyses the reaction a plastoquinone + NADPH + (n+1) H(+)(in) = a plastoquinol + NADP(+) + n H(+)(out). NDH shuttles electrons from NAD(P)H:plastoquinone, via FMN and iron-sulfur (Fe-S) centers, to quinones in the photosynthetic chain and possibly in a chloroplast respiratory chain. The immediate electron acceptor for the enzyme in this species is believed to be plastoquinone. Couples the redox reaction to proton translocation, and thus conserves the redox energy in a proton gradient. The protein is NAD(P)H-quinone oxidoreductase subunit 3, chloroplastic of Barbarea verna (Land cress).